The sequence spans 100 residues: Small ribosomal subunit protein uS14c (100 aa).

Belongs to the universal ribosomal protein uS14 family. Part of the 30S ribosomal subunit.

It localises to the plastid. It is found in the chloroplast. In terms of biological role, binds 16S rRNA, required for the assembly of 30S particles. This chain is Small ribosomal subunit protein uS14c, found in Chlorokybus atmophyticus (Soil alga).